A 130-amino-acid chain; its full sequence is Small ribosomal subunit protein uS9 (130 aa).

The protein belongs to the universal ribosomal protein uS9 family.

This chain is Small ribosomal subunit protein uS9, found in Streptococcus uberis (strain ATCC BAA-854 / 0140J).